The sequence spans 294 residues: Eukaryotic translation initiation factor 3 subunit F (294 aa).

The 149-residue stretch at 7–155 (VNVHPGVYMN…VRAYLRSKAG (149 aa)) folds into the MPN domain.

Belongs to the eIF-3 subunit F family. In terms of assembly, component of the eukaryotic translation initiation factor 3 (eIF-3) complex.

It localises to the cytoplasm. Functionally, component of the eukaryotic translation initiation factor 3 (eIF-3) complex, which is involved in protein synthesis of a specialized repertoire of mRNAs and, together with other initiation factors, stimulates binding of mRNA and methionyl-tRNAi to the 40S ribosome. The eIF-3 complex specifically targets and initiates translation of a subset of mRNAs involved in cell proliferation. This Caenorhabditis elegans protein is Eukaryotic translation initiation factor 3 subunit F.